The following is a 456-amino-acid chain: Bifunctional protein GlmU (456 aa).

Positions 1–229 are pyrophosphorylase; sequence MLNNAMSVVI…LSEVEGVNNR (229 aa). Residues 11 to 14, Lys-25, Gln-76, 81 to 82, 103 to 105, Gly-140, Glu-154, Asn-169, and Asn-227 contribute to the UDP-N-acetyl-alpha-D-glucosamine site; these read LAAG, GT, and YGD. A Mg(2+)-binding site is contributed by Asp-105. Asn-227 lines the Mg(2+) pocket. A linker region spans residues 230–250; sequence LQLSRLERVYQSEQAEKLLLA. Residues 251–456 form an N-acetyltransferase region; it reads GVMLRDPARF…EGWRRPVKKK (206 aa). Residues Arg-333 and Lys-351 each contribute to the UDP-N-acetyl-alpha-D-glucosamine site. His-363 (proton acceptor) is an active-site residue. Residues Tyr-366 and Asn-377 each coordinate UDP-N-acetyl-alpha-D-glucosamine. Acetyl-CoA is bound by residues Ala-380, 386–387, Ser-405, Ala-423, and Arg-440; that span reads NY.

It in the N-terminal section; belongs to the N-acetylglucosamine-1-phosphate uridyltransferase family. In the C-terminal section; belongs to the transferase hexapeptide repeat family. In terms of assembly, homotrimer. It depends on Mg(2+) as a cofactor.

The protein resides in the cytoplasm. The enzyme catalyses alpha-D-glucosamine 1-phosphate + acetyl-CoA = N-acetyl-alpha-D-glucosamine 1-phosphate + CoA + H(+). It carries out the reaction N-acetyl-alpha-D-glucosamine 1-phosphate + UTP + H(+) = UDP-N-acetyl-alpha-D-glucosamine + diphosphate. It participates in nucleotide-sugar biosynthesis; UDP-N-acetyl-alpha-D-glucosamine biosynthesis; N-acetyl-alpha-D-glucosamine 1-phosphate from alpha-D-glucosamine 6-phosphate (route II): step 2/2. Its pathway is nucleotide-sugar biosynthesis; UDP-N-acetyl-alpha-D-glucosamine biosynthesis; UDP-N-acetyl-alpha-D-glucosamine from N-acetyl-alpha-D-glucosamine 1-phosphate: step 1/1. The protein operates within bacterial outer membrane biogenesis; LPS lipid A biosynthesis. Catalyzes the last two sequential reactions in the de novo biosynthetic pathway for UDP-N-acetylglucosamine (UDP-GlcNAc). The C-terminal domain catalyzes the transfer of acetyl group from acetyl coenzyme A to glucosamine-1-phosphate (GlcN-1-P) to produce N-acetylglucosamine-1-phosphate (GlcNAc-1-P), which is converted into UDP-GlcNAc by the transfer of uridine 5-monophosphate (from uridine 5-triphosphate), a reaction catalyzed by the N-terminal domain. The protein is Bifunctional protein GlmU of Shigella flexneri serotype 5b (strain 8401).